A 236-amino-acid polypeptide reads, in one-letter code: 7-cyano-7-deazaguanine synthase (236 aa).

Position 7–17 (7–17 (CSGGLDSVSLA)) interacts with ATP. Residues Cys185, Cys193, Cys196, and Cys199 each coordinate Zn(2+).

Belongs to the QueC family. Zn(2+) serves as cofactor.

It carries out the reaction 7-carboxy-7-deazaguanine + NH4(+) + ATP = 7-cyano-7-deazaguanine + ADP + phosphate + H2O + H(+). It participates in purine metabolism; 7-cyano-7-deazaguanine biosynthesis. Functionally, catalyzes the ATP-dependent conversion of 7-carboxy-7-deazaguanine (CDG) to 7-cyano-7-deazaguanine (preQ(0)). The polypeptide is 7-cyano-7-deazaguanine synthase (Sinorhizobium fredii (strain NBRC 101917 / NGR234)).